The chain runs to 2161 residues: Voltage-dependent L-type calcium channel subunit alpha-1D (2161 aa).

Disordered stretches follow at residues 1–21 (MMMMMMMKKMQHQRQQQADHA), 30–49 (TRLPLSGEGPTSQPNSSKQT), and 64–100 (KAAQTMSTSAPPPVGSLSQRKRQQYAKSKKQGNSSNS). Residues 1–126 (MMMMMMMKKM…RACISIVEWK (126 aa)) are Cytoplasmic-facing. Residues 38–49 (GPTSQPNSSKQT) are compositionally biased toward polar residues. Residues 82–93 (QRKRQQYAKSKK) are compositionally biased toward basic residues. An I repeat occupies 113 to 409 (NPIRRACISI…LVLGVLSGEF (297 aa)). Residues 127-145 (PFDIFILLAIFANCVALAI) form a helical membrane-spanning segment. Residues 146–163 (YIPFPEDDSNSTNHNLEK) lie on the Extracellular side of the membrane. N155 is a glycosylation site (N-linked (GlcNAc...) asparagine). Residues 164 to 183 (VEYAFLIIFTVETFLKIIAY) form a helical membrane-spanning segment. Residues 184–195 (GLLLHPNAYVRN) lie on the Cytoplasmic side of the membrane. Residues 196–214 (GWNLLDFVIVIVGLFSVIL) traverse the membrane as a helical segment. Over 215 to 235 (EQLTKETEGGNHSSGKSGGFD) the chain is Extracellular. An N-linked (GlcNAc...) asparagine glycan is attached at N225. Residues 236–254 (VKALRAFRVLRPLRLVSGV) traverse the membrane as a helical segment. The Cytoplasmic segment spans residues 255–273 (PSLQVVLNSIIKAMVPLLH). A helical transmembrane segment spans residues 274 to 293 (IALLVLFVIIIYAIIGLELF). Over 294 to 381 (IGKMHKTCFF…WMNDAMGFEL (88 aa)) the chain is Extracellular. Residue N329 is glycosylated (N-linked (GlcNAc...) asparagine). Ca(2+) is bound at residue E364. The helical transmembrane segment at 382–406 (PWVYFVSLVIFGSFFVLNLVLGVLS) threads the bilayer. Residues 407 to 523 (GEFSKEREKA…RRCRAAVKSV (117 aa)) lie on the Cytoplasmic side of the membrane. Residues 429–446 (QQLEEDLKGYLDWITQAE) form a binding to the beta subunit region. Residues 449–482 (DPENEEEGGEEGKRNTSMPTSETESVNTENVSGE) are disordered. Residues 463 to 479 (NTSMPTSETESVNTENV) show a composition bias toward polar residues. An II repeat occupies 509 to 755 (NRFNRRRCRA…VFLAIAVDNL (247 aa)). Residues 524–543 (TFYWLVIVLVFLNTLTISSE) form a helical membrane-spanning segment. The Extracellular portion of the chain corresponds to 544 to 558 (HYNQPDWLTQIQDIA). The chain crosses the membrane as a helical span at residues 559–577 (NKVLLALFTCEMLVKMYSL). The Cytoplasmic segment spans residues 578–585 (GLQAYFVS). A helical membrane pass occupies residues 586–604 (LFNRFDCFVVCGGITETIL). At 605–614 (VELEIMSPLG) the chain is on the extracellular side. A helical membrane pass occupies residues 615 to 633 (ISVFRCVRLLRIFKVTRHW). Residues 634–652 (TSLSNLVASLLNSMKSIAS) lie on the Cytoplasmic side of the membrane. A helical transmembrane segment spans residues 653 to 673 (LLLLLFLFIIIFSLLGMQLFG). Residues 674-727 (GKFNFDETQTKRSTFDNFPQALLTVFQILTGEDWNAVMYDGIMAYGGPSSSGMI) are Extracellular-facing. Residue E705 coordinates Ca(2+). A helical transmembrane segment spans residues 728–752 (VCIYFIILFICGNYILLNVFLAIAV). The Cytoplasmic segment spans residues 753 to 886 (DNLADAESLN…VGCHKLINHH (134 aa)). Basic and acidic residues predominate over residues 766–790 (KEEAEEKERKKIARKESLENKKNNK). A disordered region spans residues 766-850 (KEEAEEKERK…AGPRPRRISE (85 aa)). Over residues 791 to 802 (PEVNQIANSDNK) the composition is skewed to polar residues. The segment covering 825–838 (VGEEEEEEEEDEPE) has biased composition (acidic residues). An III repeat occupies 873 to 1155 (NPIRVGCHKL…IFVGFVIVTF (283 aa)). The chain crosses the membrane as a helical span at residues 887–905 (IFTNLILVFIMLSSAALAA). Topologically, residues 906 to 921 (EDPIRSHSFRNTILGY) are extracellular. The chain crosses the membrane as a helical span at residues 922–941 (FDYAFTAIFTVEILLKMTTF). Residues 942 to 953 (GAFLHKGAFCRN) are Cytoplasmic-facing. Residues 954–972 (YFNLLDMLVVGVSLVSFGI) form a helical membrane-spanning segment. The Extracellular segment spans residues 973–978 (QSSAIS). A helical transmembrane segment spans residues 979–998 (VVKILRVLRVLRPLRAINRA). Residues 999–1017 (KGLKHVVQCVFVAIRTIGN) lie on the Cytoplasmic side of the membrane. The helical transmembrane segment at 1018 to 1037 (IMIVTTLLQFMFACIGVQLF) threads the bilayer. Residues 1038-1127 (KGKFYRCTDE…IGPIYNHRVE (90 aa)) are Extracellular-facing. The interval 1075–1165 (RIWQNSDFNF…QEQGEKEYKN (91 aa)) is dihydropyridine binding. E1101 contributes to the Ca(2+) binding site. Residues 1128-1148 (ISIFFIIYIIIVAFFMMNIFV) traverse the membrane as a helical segment. Residues 1149–1205 (GFVIVTFQEQGEKEYKNCELDKNQRQCVEYALKARPLRRYIPKNPYQYKFWYVVNSS) lie on the Cytoplasmic side of the membrane. One copy of the IV repeat lies at 1192 to 1467 (NPYQYKFWYV…LFVAVIMDNF (276 aa)). Residues 1206-1224 (PFEYMMFVLIMLNTLCLAM) traverse the membrane as a helical segment. At 1225 to 1239 (QHYEQSKMFNDAMDI) the chain is on the extracellular side. The helical transmembrane segment at 1240–1259 (LNMVFTGVFTVEMVLKVIAF) threads the bilayer. The Cytoplasmic segment spans residues 1260–1266 (KPKGYFS). A helical transmembrane segment spans residues 1267–1288 (DAWNTFDSLIVIGSIIDVALSE). Over 1289-1313 (ADPTESENVPVPTATPGNSEESNRI) the chain is Extracellular. The chain crosses the membrane as a helical span at residues 1314–1333 (SITFFRLFRVMRLVKLLSRG). The Cytoplasmic segment spans residues 1334-1352 (EGIRTLLWTFIKSFQALPY). A helical membrane pass occupies residues 1353–1372 (VALLIAMLFFIYAVIGMQMF). The Extracellular portion of the chain corresponds to 1373-1439 (GKVAMRDNNQ…GEEYTCGSNF (67 aa)). The interval 1420-1486 (LCDPESDYNP…LGPHHLDEFK (67 aa)) is dihydropyridine binding. The segment at 1432-1475 (EYTCGSNFAIVYFISFYMLCAFLIINLFVAVIMDNFDYLTRDWS) is phenylalkylamine binding. The helical transmembrane segment at 1440–1464 (AIVYFISFYMLCAFLIINLFVAVIM) threads the bilayer. At 1465–2161 (DNFDYLTRDW…ADEMICITTL (697 aa)) the chain is on the cytoplasmic side. 4 disordered regions span residues 1659–1678 (SCDLQDDEPEETKREEEDDV), 1684–1804 (ALLG…VKRT), 1872–1919 (PGRN…ASHR), and 2108–2152 (NGNV…EDLA). Residues 1745-1763 (SIGKQVPTSTNANLNNANM) show a composition bias toward polar residues. Basic and acidic residues predominate over residues 1779-1797 (HVSENGHHSSHKHDREPQR). A compositionally biased stretch (acidic residues) spans 2138–2152 (SDEEPDPGRDEEDLA).

The protein belongs to the calcium channel alpha-1 subunit (TC 1.A.1.11) family. CACNA1D subfamily. Voltage-dependent calcium channels are multisubunit complexes, consisting of alpha-1, alpha-2, beta and delta subunits in a 1:1:1:1 ratio. The channel activity is directed by the pore-forming and voltage-sensitive alpha-1 subunit. In many cases, this subunit is sufficient to generate voltage-sensitive calcium channel activity. The auxiliary subunits beta and alpha-2/delta linked by a disulfide bridge regulate the channel activity. Channel activity is further modulated, depending on the presence of specific delta subunit isoforms. Interacts (via IQ domain) with CABP1 and CABP4 in a calcium independent manner. Interacts with RIMBP2. In terms of tissue distribution, expressed in pancreatic islets and in brain, where it has been seen in cerebral cortex, hippocampus, basal ganglia, habenula and thalamus. Expressed in the small cell lung carcinoma cell line SCC-9. No expression in skeletal muscle.

The protein localises to the membrane. It carries out the reaction Ca(2+)(in) = Ca(2+)(out). Its function is as follows. Voltage-sensitive calcium channels (VSCC) mediate the entry of calcium ions into excitable cells and are also involved in a variety of calcium-dependent processes, including muscle contraction, hormone or neurotransmitter release, gene expression, cell motility, cell division and cell death. The isoform alpha-1D gives rise to L-type calcium currents. Long-lasting (L-type) calcium channels belong to the 'high-voltage activated' (HVA) group. They are blocked by dihydropyridines (DHP), phenylalkylamines, and by benzothiazepines. Voltage-sensitive calcium channels (VSCC) mediate the entry of calcium ions into excitable cells and are also involved in a variety of calcium-dependent processes, including muscle contraction, hormone or neurotransmitter release, gene expression, cell motility, cell division and cell death. The isoform alpha-1D gives rise to L-type calcium currents. This Homo sapiens (Human) protein is Voltage-dependent L-type calcium channel subunit alpha-1D (CACNA1D).